A 262-amino-acid chain; its full sequence is Probable carboxylesterase Culp3 (262 aa).

Residues 1–41 form the signal peptide; that stretch reads MNNRPIRLLTSGRAGLGAGALITAVVLLIALGAVWTLVAFA. C44 and C114 form a disulfide bridge. S125 acts as the Nucleophile in catalysis. C188 and C195 are joined by a disulfide. D192 is an active-site residue. H206 (proton donor/acceptor) is an active-site residue. Residues 241-262 form a disordered region; sequence LPGSVLQMPGTAAPAPESLHGR.

This sequence belongs to the cutinase family.

Its subcellular location is the secreted. The sequence is that of Probable carboxylesterase Culp3 (cut3) from Mycobacterium tuberculosis (strain CDC 1551 / Oshkosh).